Here is a 514-residue protein sequence, read N- to C-terminus: ATP synthase subunit alpha (514 aa).

170 to 177 (GDRQIGKT) is a binding site for ATP.

Belongs to the ATPase alpha/beta chains family. In terms of assembly, F-type ATPases have 2 components, CF(1) - the catalytic core - and CF(0) - the membrane proton channel. CF(1) has five subunits: alpha(3), beta(3), gamma(1), delta(1), epsilon(1). CF(0) has three main subunits: a(1), b(2) and c(9-12). The alpha and beta chains form an alternating ring which encloses part of the gamma chain. CF(1) is attached to CF(0) by a central stalk formed by the gamma and epsilon chains, while a peripheral stalk is formed by the delta and b chains.

It is found in the cell inner membrane. It catalyses the reaction ATP + H2O + 4 H(+)(in) = ADP + phosphate + 5 H(+)(out). In terms of biological role, produces ATP from ADP in the presence of a proton gradient across the membrane. The alpha chain is a regulatory subunit. The sequence is that of ATP synthase subunit alpha from Pseudomonas savastanoi pv. phaseolicola (strain 1448A / Race 6) (Pseudomonas syringae pv. phaseolicola (strain 1448A / Race 6)).